The primary structure comprises 470 residues: 3-isopropylmalate dehydratase large subunit (470 aa).

[4Fe-4S] cluster contacts are provided by Cys349, Cys409, and Cys412.

The protein belongs to the aconitase/IPM isomerase family. LeuC type 1 subfamily. Heterodimer of LeuC and LeuD. [4Fe-4S] cluster serves as cofactor.

It catalyses the reaction (2R,3S)-3-isopropylmalate = (2S)-2-isopropylmalate. Its pathway is amino-acid biosynthesis; L-leucine biosynthesis; L-leucine from 3-methyl-2-oxobutanoate: step 2/4. Catalyzes the isomerization between 2-isopropylmalate and 3-isopropylmalate, via the formation of 2-isopropylmaleate. The polypeptide is 3-isopropylmalate dehydratase large subunit (Methylobacterium radiotolerans (strain ATCC 27329 / DSM 1819 / JCM 2831 / NBRC 15690 / NCIMB 10815 / 0-1)).